The chain runs to 419 residues: O-antigen ligase (419 aa).

The Cytoplasmic segment spans residues 1-19; sequence MLTSFKLHSLKPYTLKSSM. A helical transmembrane segment spans residues 20 to 38; that stretch reads ILEIITYILCFFSMIIAFV. Residues 39–43 are Periplasmic-facing; sequence DNTFS. Residues 44–61 form a helical membrane-spanning segment; it reads IKIYNITAIVCLLSLILR. At 62-71 the chain is on the cytoplasmic side; that stretch reads GRQENYNIKN. The chain crosses the membrane as a helical span at residues 72 to 91; it reads LILPLSIFLIGLLDLIWYSA. Residues 92 to 107 are Periplasmic-facing; that stretch reads FKVDNSPFRATYHSYL. A helical transmembrane segment spans residues 108 to 125; it reads NTAKIFIFGSFIVFLTLT. The Cytoplasmic portion of the chain corresponds to 126 to 134; sequence SQLKSKKES. Residues 135 to 153 traverse the membrane as a helical segment; it reads VLYTLYSLSFLIAGYAMYI. Over 154 to 167 the chain is Periplasmic; the sequence is NSIHENDRISFGVG. The helical transmembrane segment at 168-187 threads the bilayer; that stretch reads TATGAAYSTMLIGIVSGVAI. Topologically, residues 188–194 are cytoplasmic; sequence LYTKKNH. A helical membrane pass occupies residues 195–211; the sequence is PFLFLLNSCAVLYVLAL. At 212–216 the chain is on the periplasmic side; the sequence is TQTRA. The chain crosses the membrane as a helical span at residues 217 to 234; that stretch reads TLLLFPIICVAALIAYYN. Residues 235-240 lie on the Cytoplasmic side of the membrane; it reads KSPKKF. A helical transmembrane segment spans residues 241-259; that stretch reads TSSIVLLIAILASIVIIFN. Residues 260–348 lie on the Periplasmic side of the membrane; it reads KPIQNRYNEA…NEIIEAGSLK (89 aa). A helical transmembrane segment spans residues 349–367; sequence GLMGIFSTLFLYFSLFYIA. The Cytoplasmic portion of the chain corresponds to 368 to 372; that stretch reads YKKRA. Residues 373–391 traverse the membrane as a helical segment; sequence LGLLILTLGIVGIGLSDVI. Over 392-396 the chain is Periplasmic; sequence IWARS. The chain crosses the membrane as a helical span at residues 397 to 412; sequence IPIIIISAIVLLLVIN. Topologically, residues 413 to 419 are cytoplasmic; it reads NRNNTIN.

As to quaternary structure, homodimer.

The protein resides in the cell inner membrane. It catalyses the reaction a lipid-linked O antigen + a lipid A-core oligosaccharide = a lipopolysaccharide + a polyisoprenyl diphosphate.. It participates in bacterial outer membrane biogenesis; lipopolysaccharide biosynthesis. Activity does not require ATP and magnesium ions. Functionally, transferase involved in the biosynthesis of the lipopolysaccharide (LPS). In vitro, catalyzes the transfer of a polymerized O-antigen molecule from its polyprenyl diphosphate membrane anchor to a terminal sugar of the lipid A-core oligosaccharide, finalizing the biosynthesis of the lipopolysaccharide. The enzyme is functional and can be used to give diverse hybrid O-antigens in vitro, but K12 strains do not produce the O-antigen in vivo due to mutations in the rfb gene cluster. K12 strains are phenotypically rough, their lipopolysaccharide having a complete core structure, but no O-antigen. In highly mucoid K12 strains, WaaL can ligate colanic acid (CA or M-antigen) repeats to a significant proportion of lipopolysaccharide (LPS) core acceptor molecules, forming the LPS glycoform M(LPS). The attachment point was identified as O-7 of the L-glycero-D-manno-heptose of the outer LPS core, the same position used for O-antigen ligation. Cannot catalyze ATP hydrolysis in vitro. The protein is O-antigen ligase of Escherichia coli (strain K12).